Reading from the N-terminus, the 164-residue chain is Putative 4-hydroxy-4-methyl-2-oxoglutarate aldolase (164 aa).

Substrate contacts are provided by residues 75-78 (GDML) and Arg-97. An a divalent metal cation-binding site is contributed by Asp-98.

It belongs to the class II aldolase/RraA-like family. Homotrimer. A divalent metal cation is required as a cofactor.

It catalyses the reaction 4-hydroxy-4-methyl-2-oxoglutarate = 2 pyruvate. The enzyme catalyses oxaloacetate + H(+) = pyruvate + CO2. In terms of biological role, catalyzes the aldol cleavage of 4-hydroxy-4-methyl-2-oxoglutarate (HMG) into 2 molecules of pyruvate. Also contains a secondary oxaloacetate (OAA) decarboxylase activity due to the common pyruvate enolate transition state formed following C-C bond cleavage in the retro-aldol and decarboxylation reactions. This chain is Putative 4-hydroxy-4-methyl-2-oxoglutarate aldolase, found in Hahella chejuensis (strain KCTC 2396).